The chain runs to 497 residues: Squalene monooxygenase (497 aa).

FAD is bound by residues 29 to 30 (VV), 49 to 50 (ER), Arg-57, Arg-159, Val-175, Asp-336, and Met-349. 2 helical membrane passes run 434 to 454 (FLSG…TVAL) and 467 to 487 (LGFL…AKVF).

This sequence belongs to the squalene monooxygenase family. FAD is required as a cofactor.

It is found in the microsome membrane. Its subcellular location is the endoplasmic reticulum membrane. It carries out the reaction squalene + reduced [NADPH--hemoprotein reductase] + O2 = (S)-2,3-epoxysqualene + oxidized [NADPH--hemoprotein reductase] + H2O + H(+). It participates in terpene metabolism; lanosterol biosynthesis; lanosterol from farnesyl diphosphate: step 2/3. Its function is as follows. Catalyzes the stereospecific oxidation of squalene to (S)-2,3-epoxysqualene, and is considered to be a rate-limiting enzyme in steroid biosynthesis. The chain is Squalene monooxygenase (ERG1) from Eremothecium gossypii (strain ATCC 10895 / CBS 109.51 / FGSC 9923 / NRRL Y-1056) (Yeast).